Here is a 440-residue protein sequence, read N- to C-terminus: Putative short-chain fatty acid transporter (440 aa).

Over methionine 1–aspartate 19 the chain is Periplasmic. A helical membrane pass occupies residues proline 20–proline 40. Topologically, residues glutamine 41–glycine 53 are cytoplasmic. Residues phenylalanine 54–leucine 74 traverse the membrane as a helical segment. At alanine 75–threonine 102 the chain is on the periplasmic side. A helical membrane pass occupies residues phenylalanine 103 to phenylalanine 123. Residues alanine 124–proline 137 are Cytoplasmic-facing. 2 consecutive transmembrane segments (helical) span residues leucine 138–methionine 158 and proline 159–glycine 179. Residue aspartate 180 is a topological domain, cytoplasmic. The helical transmembrane segment at threonine 181 to isoleucine 201 threads the bilayer. Residues threonine 202–arginine 244 are Periplasmic-facing. 2 helical membrane passes run isoleucine 245–histidine 265 and glycine 266–histidine 286. Over lysine 287–tyrosine 313 the chain is Periplasmic. The chain crosses the membrane as a helical span at residues alanine 314 to isoleucine 334. Over asparagine 335–alanine 351 the chain is Cytoplasmic. A helical transmembrane segment spans residues leucine 352–isoleucine 372. The Periplasmic segment spans residues proline 373–glutamine 394. The helical transmembrane segment at tryptophan 395–valine 415 threads the bilayer. At arginine 416–methionine 419 the chain is on the cytoplasmic side. A helical membrane pass occupies residues glycine 420–phenylalanine 440.

The protein resides in the cell inner membrane. May be responsible for the uptake of short-chain fatty acids. The protein is Putative short-chain fatty acid transporter (atoE) of Escherichia coli (strain K12).